A 209-amino-acid polypeptide reads, in one-letter code: Protease (209 aa).

Active-site residues include His55, Asp72, and Cys123.

The protein belongs to the peptidase C5 family. Interacts with protease cofactor pVI-C; this interaction is necessary for protease activation.

Its subcellular location is the virion. The protein localises to the host nucleus. The catalysed reaction is Cleaves proteins of the adenovirus and its host cell at two consensus sites: -Yaa-Xaa-Gly-Gly-|-Xaa- and -Yaa-Xaa-Gly-Xaa-|-Gly- (in which Yaa is Met, Ile or Leu, and Xaa is any amino acid).. Requires DNA and protease cofactor for maximal activation. Inside nascent virions, becomes partially activated by binding to the viral DNA, allowing it to cleave the cofactor that binds to the protease and fully activates it. Actin, like the viral protease cofactor, seems to act as a cofactor in the cleavage of cytokeratin 18 and of actin itself. Cleaves viral precursor proteins (pTP, pIIIa, pVI, pVII, pVIII, and pX) inside newly assembled particles giving rise to mature virions. Protease complexed to its cofactor slides along the viral DNA to specifically locate and cleave the viral precursors. Mature virions have a weakened organization compared to the unmature virions, thereby facilitating subsequent uncoating. Without maturation, the particle lacks infectivity and is unable to uncoat. Late in adenovirus infection, in the cytoplasm, may participate in the cytoskeleton destruction. Cleaves host cell cytoskeletal keratins K7 and K18. The protein is Protease of Human adenovirus D serotype 9 (HAdV-9).